The primary structure comprises 391 residues: L-tryptophan--pyruvate aminotransferase 1 (391 aa).

Pyridoxal 5'-phosphate contacts are provided by residues Y58, 100 to 101 (ST), N168, 191 to 194 (DFAY), 214 to 217 (TFSK), and R225. Residue K217 is modified to N6-(pyridoxal phosphate)lysine.

Belongs to the alliinase family. Requires pyridoxal 5'-phosphate as cofactor. In terms of tissue distribution, expressed at the leaf margin and in the vasculature of emerging young leaves. Expressed in the quiescent center and in the vasculature of root tips. Detected in the shoot apical meristem, stems, sepals, stamen filaments, the shoot and root junction, the stigma and the base of the silique.

It localises to the cytoplasm. It carries out the reaction L-tryptophan + 2-oxoglutarate = indole-3-pyruvate + L-glutamate. It catalyses the reaction L-tryptophan + pyruvate = indole-3-pyruvate + L-alanine. Its pathway is plant hormone metabolism; auxin biosynthesis. Inhibited by L-kynurenine. L-tryptophan aminotransferase involved in auxin (IAA) biosynthesis. Can convert L-tryptophan and pyruvate to indole-3-pyruvic acid (IPA) and alanine. Catalyzes the first step in IPA branch of the auxin biosynthetic pathway. Required for auxin production to initiate multiple change in growth in response to environmental and developmental cues. It is also active with phenylalanine, tyrosine, leucine, alanine, methionine and glutamine. Both TAA1 and TAR2 are required for maintaining proper auxin levels in roots, while TAA1, TAR1 and TAR2 are required for proper embryo patterning. Involved in the maintenance of the root stem cell niches and required for shade avoidance. This Arabidopsis thaliana (Mouse-ear cress) protein is L-tryptophan--pyruvate aminotransferase 1 (TAA1).